We begin with the raw amino-acid sequence, 227 residues long: Cytidylate kinase (227 aa).

12–20 (GPSGAGKGT) serves as a coordination point for ATP.

The protein belongs to the cytidylate kinase family. Type 1 subfamily.

It is found in the cytoplasm. The enzyme catalyses CMP + ATP = CDP + ADP. It carries out the reaction dCMP + ATP = dCDP + ADP. The chain is Cytidylate kinase from Salmonella paratyphi B (strain ATCC BAA-1250 / SPB7).